Reading from the N-terminus, the 1494-residue chain is ABC multidrug transporter atrG (1494 aa).

The segment covering 1–11 (MSLLGTINPNL) has biased composition (polar residues). Disordered stretches follow at residues 1 to 48 (MSLL…RTSD) and 84 to 105 (FSVSQNAENPFLETKEDSTLNP). N-linked (GlcNAc...) asparagine glycosylation occurs at Asn41. 2 N-linked (GlcNAc...) asparagine glycosylation sites follow: Asn141 and Asn340. The ABC transporter 1 domain maps to 162-416 (LQVGALFRAV…FTTMGFECPE (255 aa)). 2 consecutive transmembrane segments (helical) span residues 527 to 547 (LTMSQLIGNFIMALIIGSVFY) and 561 to 581 (ALLFFAVLLNAFSSALEILTL). A glycan (N-linked (GlcNAc...) asparagine) is linked at Asn622. The next 3 membrane-spanning stretches (helical) occupy residues 636–656 (GPFFVFLLFTFVTTMTMSMLF), 669–689 (ALVPAAILILGLVIYTGFTIP), and 778–798 (GIMFAFMVFFLATYLTATEYI). The N-linked (GlcNAc...) asparagine glycan is linked to Asn835. Residues 852–1095 (FHWQDVCYDI…LASYFERNGA (244 aa)) enclose the ABC transporter 2 domain. 888-895 (GVSGAGKT) is an ATP binding site. The next 5 helical transmembrane spans lie at 1191 to 1211 (YIYSKAVLCILTSLYIGFSFF), 1227 to 1247 (IFMLMTIFGNLVQQIMPNFVT), 1276 to 1296 (LPWNALMSVIIFVCWYYPIGL), 1312 to 1332 (LMWLLILSFLLFTSTFAHMMI), and 1351 to 1371 (LCLIFCGVLATPETLPGFWIF). N-linked (GlcNAc...) asparagine glycans are attached at residues Asn1410 and Asn1432. The helical transmembrane segment at 1463–1483 (FGIMWAFIVFNIAAAVFIYWL) threads the bilayer.

It belongs to the ABC transporter superfamily. ABCG family. PDR (TC 3.A.1.205) subfamily.

Its subcellular location is the cell membrane. The catalysed reaction is (R)-miconazole(in) + ATP + H2O = (R)-miconazole(out) + ADP + phosphate + H(+). Functionally, pleiotropic ABC efflux transporter involved in the basal level of azole susceptibility. Confers resistance to miconazole and clotrimazole. This Aspergillus oryzae (strain ATCC 42149 / RIB 40) (Yellow koji mold) protein is ABC multidrug transporter atrG.